Consider the following 52-residue polypeptide: Insulin (52 aa).

Disulfide bonds link cysteine 7-cysteine 38, cysteine 19-cysteine 51, and cysteine 37-cysteine 42.

This sequence belongs to the insulin family. Heterodimer of a B chain and an A chain linked by two disulfide bonds.

It localises to the secreted. Functionally, insulin decreases blood glucose concentration. It increases cell permeability to monosaccharides, amino acids and fatty acids. It accelerates glycolysis, the pentose phosphate cycle, and glycogen synthesis in liver. This chain is Insulin (ins), found in Atractosteus spatula (Alligator gar).